A 338-amino-acid polypeptide reads, in one-letter code: D-erythrose-4-phosphate dehydrogenase (338 aa).

11–12 (RI) provides a ligand contact to NAD(+). Substrate-binding positions include 153-155 (SCT), arginine 199, 212-213 (TK), and arginine 235. Catalysis depends on cysteine 154, which acts as the Nucleophile. NAD(+) is bound at residue asparagine 317.

It belongs to the glyceraldehyde-3-phosphate dehydrogenase family. Epd subfamily. Homotetramer.

Its subcellular location is the cytoplasm. The enzyme catalyses D-erythrose 4-phosphate + NAD(+) + H2O = 4-phospho-D-erythronate + NADH + 2 H(+). Its pathway is cofactor biosynthesis; pyridoxine 5'-phosphate biosynthesis; pyridoxine 5'-phosphate from D-erythrose 4-phosphate: step 1/5. Functionally, catalyzes the NAD-dependent conversion of D-erythrose 4-phosphate to 4-phosphoerythronate. This Shewanella amazonensis (strain ATCC BAA-1098 / SB2B) protein is D-erythrose-4-phosphate dehydrogenase.